A 546-amino-acid polypeptide reads, in one-letter code: MFS-type transporter patC (546 aa).

Residues 1 to 15 (MSIDASPSESVLESQ) are compositionally biased toward polar residues. The interval 1–29 (MSIDASPSESVLESQTPDRVDESIPIKAE) is disordered. The span at 16 to 29 (TPDRVDESIPIKAE) shows a compositional bias: basic and acidic residues. Helical transmembrane passes span 41–61 (IVGFRWLLVCIAVFSANLLYG), 89–109 (VGFTLGSVVFILPLGKAYAIF), 113–133 (WLFLGCLTMFAAGSALCGAAP), 143–163 (VWAGAGGAGMYLGNLNLITIL), 171–191 (VYVGLVGLIYGTGCILGPIIG), 203–223 (WSFYLNLVIFGVMSPIYVFLL), 245–265 (WVGTVLSAGMHISIILFIVFG), 277–297 (IALYVVSAVLTIAFVLSQYFC), 318–338 (LLLYIIMACGGAALFVAVYYI), 350–370 (GIMSAVRLLPFVCFYVATILL), 379–399 (GYFIIWYLMSGVFMLIGAVLM), 416–436 (ILMGLGMTTTQAAYAVGPAIV), 447–467 (FMNIGQGQSQLLGLAIASAIF), and 515–535 (VIVSSISDVYVMAISAGALYV).

It belongs to the major facilitator superfamily. TCR/Tet family.

Its subcellular location is the vacuole membrane. It localises to the cell membrane. MFS-type transporter; part of the gene cluster that mediates the biosynthesis of patulin, an acetate-derived tetraketide mycotoxin produced by several fungal species that shows antimicrobial properties against several bacteria. May be involved in the secretion of E-ascladiol to be converted to patulin by the secreted patulin synthase patE. The polypeptide is MFS-type transporter patC (Penicillium expansum (Blue mold rot fungus)).